The sequence spans 120 residues: NAD(P)H-quinone oxidoreductase subunit 3, chloroplastic (120 aa).

The next 3 helical transmembrane spans lie at Tyr-7–Ile-27, Met-64–Met-84, and Leu-89–Ile-109.

This sequence belongs to the complex I subunit 3 family. As to quaternary structure, NDH is composed of at least 16 different subunits, 5 of which are encoded in the nucleus.

It localises to the plastid. The protein resides in the chloroplast thylakoid membrane. It carries out the reaction a plastoquinone + NADH + (n+1) H(+)(in) = a plastoquinol + NAD(+) + n H(+)(out). The enzyme catalyses a plastoquinone + NADPH + (n+1) H(+)(in) = a plastoquinol + NADP(+) + n H(+)(out). In terms of biological role, NDH shuttles electrons from NAD(P)H:plastoquinone, via FMN and iron-sulfur (Fe-S) centers, to quinones in the photosynthetic chain and possibly in a chloroplast respiratory chain. The immediate electron acceptor for the enzyme in this species is believed to be plastoquinone. Couples the redox reaction to proton translocation, and thus conserves the redox energy in a proton gradient. This chain is NAD(P)H-quinone oxidoreductase subunit 3, chloroplastic, found in Anthoceros angustus (Hornwort).